Here is a 277-residue protein sequence, read N- to C-terminus: Large ribosomal subunit protein uL2 (277 aa).

The tract at residues 226–277 (MNPVDHPHGGGEGRSPIGMPSPVTPWGKPTLGYKTRKPNKKSDRLIVSRRKK) is disordered.

The protein belongs to the universal ribosomal protein uL2 family. Part of the 50S ribosomal subunit. Forms a bridge to the 30S subunit in the 70S ribosome.

One of the primary rRNA binding proteins. Required for association of the 30S and 50S subunits to form the 70S ribosome, for tRNA binding and peptide bond formation. It has been suggested to have peptidyltransferase activity; this is somewhat controversial. Makes several contacts with the 16S rRNA in the 70S ribosome. The polypeptide is Large ribosomal subunit protein uL2 (Symbiobacterium thermophilum (strain DSM 24528 / JCM 14929 / IAM 14863 / T)).